The chain runs to 314 residues: MKKVVILLNMGGADDLSQVELFLKNMFNDPYILGIKNRKIRSVLAWLITKMRLKSATRNYTELGGKSPIGDITRSLIDKLNIKFGNENLTFDYAMNYTPPFAIDSLKKYKYADEILLFPLYPHHSRTTIVSSLDSANRAIKELSIKSNIKVINYFYKDERYNKIITSSIKEKIAEMNSSQIDLIFSSHSLPKKIIEKGDLYETHTNEHVKIISDMLAKDGVKFNSISLAYQSRLGPVEWLGPNLSEVLSNLKSKKALIYPISFCIDNSETDFELDIEYRKIADQKEFDYYEVVKAPDDSEAFVDYIAYKVKELV.

Residues H188 and E269 each coordinate Fe cation.

Belongs to the ferrochelatase family.

Its subcellular location is the cytoplasm. The catalysed reaction is heme b + 2 H(+) = protoporphyrin IX + Fe(2+). The protein operates within porphyrin-containing compound metabolism; protoheme biosynthesis; protoheme from protoporphyrin-IX: step 1/1. Catalyzes the ferrous insertion into protoporphyrin IX. The polypeptide is Ferrochelatase (Campylobacter fetus subsp. fetus (strain 82-40)).